A 233-amino-acid chain; its full sequence is Octanoyltransferase (233 aa).

A BPL/LPL catalytic domain is found at 36–211 (DTTPDEIWLV…EFTRQLGYPT (176 aa)). Substrate contacts are provided by residues 75–82 (RGGQITYH), 142–144 (SLG), and 155–157 (GLA). C173 (acyl-thioester intermediate) is an active-site residue.

It belongs to the LipB family.

It is found in the cytoplasm. It catalyses the reaction octanoyl-[ACP] + L-lysyl-[protein] = N(6)-octanoyl-L-lysyl-[protein] + holo-[ACP] + H(+). It functions in the pathway protein modification; protein lipoylation via endogenous pathway; protein N(6)-(lipoyl)lysine from octanoyl-[acyl-carrier-protein]: step 1/2. Functionally, catalyzes the transfer of endogenously produced octanoic acid from octanoyl-acyl-carrier-protein onto the lipoyl domains of lipoate-dependent enzymes. Lipoyl-ACP can also act as a substrate although octanoyl-ACP is likely to be the physiological substrate. The protein is Octanoyltransferase of Yersinia pseudotuberculosis serotype O:1b (strain IP 31758).